Consider the following 485-residue polypeptide: Vacuolar fusion protein CCZ1 homolog (485 aa).

It belongs to the CCZ1 family. In terms of assembly, component of the Mon1-Ccz1 guanyl-nucleotide exchange factor complex made up of Mon1, Ccz1 and Bulli; the interaction of Bulli with the Mon1-Ccz1 heterodimer is mediated via the C-terminal Mic1 domain of Bulli. Mon1 and Ccz1 form a stable complex which displays Rab7 GEF activity with or without Bulli; GEF activity is enhanced by Bulli possibly by improving membrane association of the complex. Interacts with Rab5 and Rab7; preferentially binds GTP-bound Rab5 and GDP-bound Rab7.

It localises to the cytoplasm. The protein resides in the cytosol. Its activity is regulated as follows. The Rab7 guanyl-nucleotide exchange factor (GEF) activity of the Mon1-Ccz1 complex is autoinhibited by the N-terminal disordered region of Mon1. GEF activity is stimulated by Rab5-mediated recruitment to membranes. Its function is as follows. Part of the Mon1-Ccz1 guanyl-nucleotide exchange factor complex specific for Rab7 that promotes the exchange of GDP to GTP, converting Rab7 from an inactive GDP-bound form into an active GTP-bound form. Required for recruitment of Rab7 to endosomal and autophagosomal membranes to mediate endolysosomal and autolysosomal vesicle maturation. Required for fusion of multivesicular bodies and lysosomes but not their formation or trafficking. Involved in the replacement of Rab5 (and possibly Rab4) with Rab7, also known as Rab conversion or the Rab cascade, during endosomal maturation. The Mon1-Ccz1 complex is recruited to phosphatidylinositol 3-phosphate (PtdIns[3]P) enriched membranes by Rab5, which stimulates recruitment and guanyl-nucleotide exchange of Rab7. Together with Rab7 required for autolysosome formation in fat cells and autophagic degradation during starvation-induced basal and developmental autophagy. This Drosophila melanogaster (Fruit fly) protein is Vacuolar fusion protein CCZ1 homolog.